Consider the following 367-residue polypeptide: MSDYTQQLQDKKDHLKTLFAGLDVPEWEVYESPDKHYRMRAEFRIWHEGGEMFYAMFEKGQKAGGASLIRCDRFEAASEAVNRLMPELIAVAAQSAELRNRWYAVEFLSTLSGEMLVTMIYHKRLDNEWMQAAQALQQQLDISVIGRSRGQKIVLKQDYVTETLKVGNRDFRYRQIEGSFTQPNAAVCQKMLEWACGAAEGLDGDLLELYCGNGNFTLPLSEKFERVLATEISKTSVSAAQWNIEANRIGNIKIARLSAEEFTEAYTGKREFKRLKDGGIALTDYAFSTIFVDPPRAGIDEETLKLVSQFDNIIYISCNPETLRTNLDTLAETHTVERAALFDQFPFTHHIESGVLLKKKILGKSKR.

Q182, Y210, N215, E231, and D293 together coordinate S-adenosyl-L-methionine. C318 serves as the catalytic Nucleophile. Catalysis depends on E352, which acts as the Proton acceptor.

The protein belongs to the class I-like SAM-binding methyltransferase superfamily. RNA M5U methyltransferase family. TrmA subfamily.

The catalysed reaction is uridine(54) in tRNA + S-adenosyl-L-methionine = 5-methyluridine(54) in tRNA + S-adenosyl-L-homocysteine + H(+). The enzyme catalyses uridine(341) in tmRNA + S-adenosyl-L-methionine = 5-methyluridine(341) in tmRNA + S-adenosyl-L-homocysteine + H(+). In terms of biological role, dual-specificity methyltransferase that catalyzes the formation of 5-methyluridine at position 54 (m5U54) in all tRNAs, and that of position 341 (m5U341) in tmRNA (transfer-mRNA). The sequence is that of tRNA/tmRNA (uracil-C(5))-methyltransferase from Neisseria meningitidis serogroup C (strain 053442).